A 1809-amino-acid chain; its full sequence is Pyochelin synthetase PchF (1809 aa).

Residues Phe69–Pro490 are condensation/cyclization. The interval Phe520–Arg915 is adenylation. Positions Ala1407–Pro1488 constitute a Carrier domain. Position 1442 is an O-(pantetheine 4'-phosphoryl)serine (Ser1442). The interval Leu1584–Gln1797 is thioesterase.

It belongs to the NRP synthetase family. The cofactor is pantetheine 4'-phosphate.

It carries out the reaction holo-[peptidyl-carrier protein] + L-cysteine + ATP = L-cysteinyl-[peptidyl-carrier protein] + AMP + diphosphate. It functions in the pathway siderophore biosynthesis. Its function is as follows. Involved in the biosynthesis of the siderophore pyochelin. Adenylates L-cysteine and loads it onto its peptidyl carrier domain via a thioester linkage to the phosphopanthetheine moiety. Then forms a peptide bond between the salicyl-thiazolinyl intermediate bound to the second carrier domain of PchE and the cysteine bound to its own peptidyl carrier domain to form the salicyl-thiazolinyl-cysteinyl-S-PCP2 intermediate. It subsequently cyclizes the C-terminal cysteine to form the second thiazoline heterocycle in the salicyl-thiazolinyl-thiazolinyl-S-PCP2 intermediate. When this intermediate is released by the action of a thioesterase, it produces the tricyclic acid hydroxyphenyl-thiazolyl-thiazolinyl-carboxylic acid (HPTT-COOH), an advanced intermediate containing the aryl-4,2-bis-heterocyclic skeleton of the bithiazoline class of siderophores. In Pseudomonas aeruginosa (strain ATCC 15692 / DSM 22644 / CIP 104116 / JCM 14847 / LMG 12228 / 1C / PRS 101 / PAO1), this protein is Pyochelin synthetase PchF.